Reading from the N-terminus, the 172-residue chain is Shikimate kinase (172 aa).

11 to 16 (GSGKTT) contributes to the ATP binding site. Threonine 15 is a Mg(2+) binding site. Positions 33, 57, and 79 each coordinate substrate. Residue arginine 117 participates in ATP binding. Residue arginine 136 coordinates substrate.

The protein belongs to the shikimate kinase family. As to quaternary structure, monomer. It depends on Mg(2+) as a cofactor.

Its subcellular location is the cytoplasm. It catalyses the reaction shikimate + ATP = 3-phosphoshikimate + ADP + H(+). It functions in the pathway metabolic intermediate biosynthesis; chorismate biosynthesis; chorismate from D-erythrose 4-phosphate and phosphoenolpyruvate: step 5/7. In terms of biological role, catalyzes the specific phosphorylation of the 3-hydroxyl group of shikimic acid using ATP as a cosubstrate. The chain is Shikimate kinase from Caldicellulosiruptor saccharolyticus (strain ATCC 43494 / DSM 8903 / Tp8T 6331).